The chain runs to 310 residues: Junctional adhesion molecule C (310 aa).

A signal peptide spans 1–29; the sequence is MALSRRLRLRLYARLPDFFLLLLFRGCMI. Over 30 to 241 the chain is Extracellular; it reads EAVNLKSSNR…GQDMEVYDLN (212 aa). An Ig-like V-type domain is found at 35 to 127; the sequence is KSSNRNPVVH…VALNDRKEVD (93 aa). Disulfide bonds link Cys53/Cys115 and Cys160/Cys219. N-linked (GlcNAc...) asparagine glycans are attached at residues Asn104 and Asn192. The region spanning 139–236 is the Ig-like C2-type domain; sequence PVTPVCRIPA…AARCEGQDME (98 aa). Residues 242–262 form a helical membrane-spanning segment; it reads IAGIIGGVLVVLIVLAVITMG. At 263-310 the chain is on the cytoplasmic side; that stretch reads ICCAYRRGCFISSKQDGESYKSPGKHDGVNYIRTSEEGDFRHKSSFVI. 2 S-palmitoyl cysteine lipidation sites follow: Cys264 and Cys265.

It belongs to the immunoglobulin superfamily. Interacts with ITGAM. Interacts with GORASP2. In terms of processing, proteolytically cleaved from endothelial cells surface into a soluble form by ADAM10 and ADAM17; the release of soluble JAM3 is increased by pro-inflammatory factors. Post-translationally, N-glycosylated. S-palmitoylated by ZDHHC7. S-palmitoylation promotes expression at tight junctions. Colocalizes with Jam2 near the lumen of seminiferous tubulues. Detected at junctional plaques that correspond to cell-cell contacts between spermatids and Sertoli cells. Detected on endothelial cells, in brain vessels and kidney glomeruli (at protein level). Detected in heart, lung, liver, kidney, testis, thymus, lymph node and Peyer patch. Endothelial cells.

Its subcellular location is the cell membrane. The protein localises to the cell junction. The protein resides in the desmosome. It localises to the tight junction. It is found in the secreted. Functionally, junctional adhesion protein that mediates heterotypic cell-cell interactions with its cognate receptor JAM2 to regulate different cellular processes. Plays a role in homing and mobilization of hematopoietic stem and progenitor cells within the bone marrow. At the surface of bone marrow stromal cells, it contributes to the retention of the hematopoietic stem and progenitor cells expressing JAM3. Plays a central role in leukocytes extravasation by facilitating transmigration through the endothelium. Plays a role in spermatogenesis where JAM2 and JAM3, which are respectively expressed by Sertoli and germ cells, mediate an interaction between both cell types and play an essential role in the anchorage of germ cells onto Sertoli cells and the assembly of cell polarity complexes during spermatid differentiation. Also functions as a counter-receptor for ITGAM, mediating leukocyte-platelet interactions and is involved in the regulation of transepithelial migration of polymorphonuclear neutrophils (PMN). Plays a role in angiogenesis. Plays a role in the regulation of cell migration. During myogenesis, it is involved in myocyte fusion. Promotes chemotaxis of vascular endothelial cells and stimulates angiogenesis. In Mus musculus (Mouse), this protein is Junctional adhesion molecule C (Jam3).